An 880-amino-acid polypeptide reads, in one-letter code: Alanine--tRNA ligase (880 aa).

Residues H568, H572, C670, and H674 each coordinate Zn(2+).

It belongs to the class-II aminoacyl-tRNA synthetase family. Requires Zn(2+) as cofactor.

The protein resides in the cytoplasm. The catalysed reaction is tRNA(Ala) + L-alanine + ATP = L-alanyl-tRNA(Ala) + AMP + diphosphate. Its function is as follows. Catalyzes the attachment of alanine to tRNA(Ala) in a two-step reaction: alanine is first activated by ATP to form Ala-AMP and then transferred to the acceptor end of tRNA(Ala). Also edits incorrectly charged Ser-tRNA(Ala) and Gly-tRNA(Ala) via its editing domain. This Ligilactobacillus salivarius (strain UCC118) (Lactobacillus salivarius) protein is Alanine--tRNA ligase.